Consider the following 223-residue polypeptide: ATP-dependent Clp protease proteolytic subunit 2 (223 aa).

Serine 118 functions as the Nucleophile in the catalytic mechanism. The active site involves histidine 143.

This sequence belongs to the peptidase S14 family. As to quaternary structure, fourteen ClpP subunits assemble into 2 heptameric rings which stack back to back to give a disk-like structure with a central cavity, resembling the structure of eukaryotic proteasomes.

It is found in the cytoplasm. It carries out the reaction Hydrolysis of proteins to small peptides in the presence of ATP and magnesium. alpha-casein is the usual test substrate. In the absence of ATP, only oligopeptides shorter than five residues are hydrolyzed (such as succinyl-Leu-Tyr-|-NHMec, and Leu-Tyr-Leu-|-Tyr-Trp, in which cleavage of the -Tyr-|-Leu- and -Tyr-|-Trp bonds also occurs).. In terms of biological role, cleaves peptides in various proteins in a process that requires ATP hydrolysis. Has a chymotrypsin-like activity. Plays a major role in the degradation of misfolded proteins. The chain is ATP-dependent Clp protease proteolytic subunit 2 from Leifsonia xyli subsp. xyli (strain CTCB07).